Consider the following 187-residue polypeptide: ATP-dependent protease subunit HslV (187 aa).

Residue threonine 13 is part of the active site. Positions 172, 175, and 178 each coordinate Na(+).

This sequence belongs to the peptidase T1B family. HslV subfamily. In terms of assembly, a double ring-shaped homohexamer of HslV is capped on each side by a ring-shaped HslU homohexamer. The assembly of the HslU/HslV complex is dependent on binding of ATP.

It localises to the cytoplasm. It carries out the reaction ATP-dependent cleavage of peptide bonds with broad specificity.. With respect to regulation, allosterically activated by HslU binding. In terms of biological role, protease subunit of a proteasome-like degradation complex believed to be a general protein degrading machinery. In Caulobacter sp. (strain K31), this protein is ATP-dependent protease subunit HslV.